The chain runs to 216 residues: Cytochrome c biogenesis ATP-binding export protein CcmA (216 aa).

The region spanning V11–V216 is the ABC transporter domain. G43–T50 is a binding site for ATP.

This sequence belongs to the ABC transporter superfamily. CcmA exporter (TC 3.A.1.107) family. In terms of assembly, the complex is composed of two ATP-binding proteins (CcmA) and two transmembrane proteins (CcmB).

It is found in the cell inner membrane. It carries out the reaction heme b(in) + ATP + H2O = heme b(out) + ADP + phosphate + H(+). Its function is as follows. Part of the ABC transporter complex CcmAB involved in the biogenesis of c-type cytochromes; once thought to export heme, this seems not to be the case, but its exact role is uncertain. Responsible for energy coupling to the transport system. The protein is Cytochrome c biogenesis ATP-binding export protein CcmA of Shewanella sp. (strain MR-4).